The following is a 205-amino-acid chain: Small ribosomal subunit protein mS26 (205 aa).

The transit peptide at 1 to 27 (MLRALSRLGAGTPCRPRAPLVLPARGR) directs the protein to the mitochondrion.

Belongs to the mitochondrion-specific ribosomal protein mS26 family. In terms of assembly, component of the mitochondrial small ribosomal subunit (mt-SSU). Mature mammalian 55S mitochondrial ribosomes consist of a small (28S) and a large (39S) subunit. The 28S small subunit contains a 12S ribosomal RNA (12S mt-rRNA) and 30 different proteins. The 39S large subunit contains a 16S rRNA (16S mt-rRNA), a copy of mitochondrial valine transfer RNA (mt-tRNA(Val)), which plays an integral structural role, and 52 different proteins.

It is found in the mitochondrion. This Homo sapiens (Human) protein is Small ribosomal subunit protein mS26 (MRPS26).